Reading from the N-terminus, the 223-residue chain is Endonuclease V (223 aa).

Residues Asp-45 and Asp-113 each coordinate Mg(2+).

It belongs to the endonuclease V family. Requires Mg(2+) as cofactor.

It localises to the cytoplasm. The enzyme catalyses Endonucleolytic cleavage at apurinic or apyrimidinic sites to products with a 5'-phosphate.. In terms of biological role, DNA repair enzyme involved in the repair of deaminated bases. Selectively cleaves double-stranded DNA at the second phosphodiester bond 3' to a deoxyinosine leaving behind the intact lesion on the nicked DNA. The polypeptide is Endonuclease V (Dehalococcoides mccartyi (strain CBDB1)).